Here is a 101-residue protein sequence, read N- to C-terminus: Small ribosomal subunit protein uS14 (101 aa).

Residues 32 to 62 are disordered; it reads GDAKRSDAEREAARLGLQKLPRNANPTRQRN. Over residues 33–44 the composition is skewed to basic and acidic residues; it reads DAKRSDAEREAA.

This sequence belongs to the universal ribosomal protein uS14 family. As to quaternary structure, part of the 30S ribosomal subunit. Contacts proteins S3 and S10.

In terms of biological role, binds 16S rRNA, required for the assembly of 30S particles and may also be responsible for determining the conformation of the 16S rRNA at the A site. The chain is Small ribosomal subunit protein uS14 from Verminephrobacter eiseniae (strain EF01-2).